Reading from the N-terminus, the 557-residue chain is Aerobic glycerol-3-phosphate dehydrogenase (557 aa).

FAD is bound at residue 21 to 49 (DLVIIGGGITGAGIALDASERGMKVALVE).

Belongs to the FAD-dependent glycerol-3-phosphate dehydrogenase family. The cofactor is FAD.

It localises to the cytoplasm. It catalyses the reaction a quinone + sn-glycerol 3-phosphate = dihydroxyacetone phosphate + a quinol. It functions in the pathway polyol metabolism; glycerol degradation via glycerol kinase pathway; glycerone phosphate from sn-glycerol 3-phosphate (aerobic route): step 1/1. This is Aerobic glycerol-3-phosphate dehydrogenase (glpD) from Staphylococcus aureus (strain MRSA252).